Consider the following 131-residue polypeptide: MLRKAIADIEAKYLRTDLPEMRAGDSVRVHTKIKEGDKERIQVFEGVVIAYRKGAPGSSMFTVRKVSYGVGVERMFPVHSPRIDKIEVVGHGGVRRSRLYFLRNLQGKAARLHQEEGPGAADAAHAAPTPA.

The protein belongs to the bacterial ribosomal protein bL19 family.

This protein is located at the 30S-50S ribosomal subunit interface and may play a role in the structure and function of the aminoacyl-tRNA binding site. This chain is Large ribosomal subunit protein bL19, found in Anaeromyxobacter dehalogenans (strain 2CP-C).